A 166-amino-acid chain; its full sequence is Ribosome maturation factor RimM (166 aa).

A PRC barrel domain is found at Asp91–Leu163.

This sequence belongs to the RimM family. As to quaternary structure, binds ribosomal protein uS19.

It localises to the cytoplasm. In terms of biological role, an accessory protein needed during the final step in the assembly of 30S ribosomal subunit, possibly for assembly of the head region. Essential for efficient processing of 16S rRNA. May be needed both before and after RbfA during the maturation of 16S rRNA. It has affinity for free ribosomal 30S subunits but not for 70S ribosomes. The protein is Ribosome maturation factor RimM of Corynebacterium diphtheriae (strain ATCC 700971 / NCTC 13129 / Biotype gravis).